The following is a 312-amino-acid chain: Olfactory receptor 6C68 (312 aa).

Topologically, residues 1–23 are extracellular; it reads MRKHTAITTFILLGLTEDPQLQV. The helical transmembrane segment at 24-44 threads the bilayer; it reads LLFMFLFITYMLSVTGKLTII. Over 45–55 the chain is Cytoplasmic; that stretch reads ALTMLDPHLKT. The helical transmembrane segment at 56–76 threads the bilayer; the sequence is PMYFFLQNLSFLEISFTATCV. The Extracellular segment spans residues 77–95; it reads PRFLYSISTGNKIITYNAC. Cysteine 95 and cysteine 177 are oxidised to a cystine. A helical transmembrane segment spans residues 96-116; sequence VIQLFFADLFGVTEFFLLATM. Residues 117-143 lie on the Cytoplasmic side of the membrane; it reads SYDRYVAICKPLHYMAIMSNKVCKTMV. The helical transmembrane segment at 144–164 threads the bilayer; it reads ICCWMAALMIILPPLSLGFHL. The Extracellular segment spans residues 165 to 197; it reads EFCDSNVINHFGCDALPILKIPCSDTSLIEQMV. The chain crosses the membrane as a helical span at residues 198 to 218; that stretch reads VASAVLTFIITLVCVVLSYTY. The Cytoplasmic segment spans residues 219-239; the sequence is IIRTILKFPSVQQKKKAFSTC. The chain crosses the membrane as a helical span at residues 240–260; sequence SSHITVVSITYGSCIFIYIKP. The Extracellular portion of the chain corresponds to 261-271; sequence SAKEEVNINKG. A helical transmembrane segment spans residues 272-292; it reads VSVLISSISPMLNSFIYTLRN. The Cytoplasmic portion of the chain corresponds to 293 to 312; that stretch reads EQVKQAFHDSLKKIAFRLKK.

This sequence belongs to the G-protein coupled receptor 1 family.

The protein resides in the cell membrane. Odorant receptor. The chain is Olfactory receptor 6C68 (OR6C68) from Homo sapiens (Human).